Here is a 308-residue protein sequence, read N- to C-terminus: Tyrosine recombinase XerC (308 aa).

In terms of domain architecture, Core-binding (CB) spans 20–101 (SKLHTLIDDF…SVKAFSSWAQ (82 aa)). Residues 122-302 (DLPKILGEQQ…SNKRLLEAFN (181 aa)) form the Tyr recombinase domain. Residues arginine 163, lysine 187, histidine 254, arginine 257, and histidine 280 contribute to the active site. The active-site O-(3'-phospho-DNA)-tyrosine intermediate is tyrosine 289.

This sequence belongs to the 'phage' integrase family. XerC subfamily. In terms of assembly, forms a cyclic heterotetrameric complex composed of two molecules of XerC and two molecules of XerD.

It is found in the cytoplasm. In terms of biological role, site-specific tyrosine recombinase, which acts by catalyzing the cutting and rejoining of the recombining DNA molecules. The XerC-XerD complex is essential to convert dimers of the bacterial chromosome into monomers to permit their segregation at cell division. It also contributes to the segregational stability of plasmids. The protein is Tyrosine recombinase XerC of Corynebacterium glutamicum (strain ATCC 13032 / DSM 20300 / JCM 1318 / BCRC 11384 / CCUG 27702 / LMG 3730 / NBRC 12168 / NCIMB 10025 / NRRL B-2784 / 534).